Reading from the N-terminus, the 411-residue chain is Glutamyl-tRNA reductase (411 aa).

Substrate-binding positions include 48–51, S106, 111–113, and Q117; these read TCNR and EDQ. Residue C49 is the Nucleophile of the active site. Position 186–191 (186–191) interacts with NADP(+); it reads GAGDMG.

Belongs to the glutamyl-tRNA reductase family. As to quaternary structure, homodimer.

It carries out the reaction (S)-4-amino-5-oxopentanoate + tRNA(Glu) + NADP(+) = L-glutamyl-tRNA(Glu) + NADPH + H(+). It functions in the pathway porphyrin-containing compound metabolism; protoporphyrin-IX biosynthesis; 5-aminolevulinate from L-glutamyl-tRNA(Glu): step 1/2. Catalyzes the NADPH-dependent reduction of glutamyl-tRNA(Glu) to glutamate 1-semialdehyde (GSA). This is Glutamyl-tRNA reductase from Clostridium novyi (strain NT).